The sequence spans 608 residues: 1-deoxy-D-xylulose-5-phosphate synthase (608 aa).

Thiamine diphosphate is bound by residues His-66 and 107-109 (GHA). A Mg(2+)-binding site is contributed by Asp-138. Residues 139 to 140 (GA), Asn-167, Phe-277, and Glu-350 contribute to the thiamine diphosphate site. Asn-167 provides a ligand contact to Mg(2+).

Belongs to the transketolase family. DXPS subfamily. As to quaternary structure, homodimer. Mg(2+) serves as cofactor. The cofactor is thiamine diphosphate.

The enzyme catalyses D-glyceraldehyde 3-phosphate + pyruvate + H(+) = 1-deoxy-D-xylulose 5-phosphate + CO2. Its pathway is metabolic intermediate biosynthesis; 1-deoxy-D-xylulose 5-phosphate biosynthesis; 1-deoxy-D-xylulose 5-phosphate from D-glyceraldehyde 3-phosphate and pyruvate: step 1/1. Catalyzes the acyloin condensation reaction between C atoms 2 and 3 of pyruvate and glyceraldehyde 3-phosphate to yield 1-deoxy-D-xylulose-5-phosphate (DXP). This Thermotoga sp. (strain RQ2) protein is 1-deoxy-D-xylulose-5-phosphate synthase.